The following is a 472-amino-acid chain: Squamosa promoter-binding-like protein 18 (472 aa).

The disordered stretch occupies residues 89 to 110; sequence AKVPPSTSTLKRPRGGGGGGGG. Residues 112 to 189 form an SBP-type zinc finger; the sequence is CPSCAVDGCK…DGHNRRRRKP (78 aa). The Zn(2+) site is built by Cys-115, Cys-120, Cys-137, His-140, Cys-156, Cys-159, His-163, and Cys-175. The Bipartite nuclear localization signal motif lies at 172–188; the sequence is KRSCRKRLDGHNRRRRK. Disordered regions lie at residues 179-218, 233-261, and 358-381; these read LDGHNRRRRKPQADSMSSGSFMTSQQGTRFASFTPPRPEP, SHHHHPHPVMTSRQPHFVGSPSSATTAAF, and SVDVSRMVQPSPAAAAGAEHHHHH. Positions 192-209 are enriched in polar residues; sequence DSMSSGSFMTSQQGTRFA. The segment covering 252-261 has biased composition (low complexity); the sequence is SPSSATTAAF.

As to expression, expressed in young panicles.

It localises to the nucleus. Trans-acting factor that binds specifically to the consensus nucleotide sequence 5'-TNCGTACAA-3'. May be involved in panicle development. The protein is Squamosa promoter-binding-like protein 18 (SPL18) of Oryza sativa subsp. japonica (Rice).